Reading from the N-terminus, the 461-residue chain is Flavin-containing monooxygenase FMO GS-OX4 (461 aa).

Position 17-22 (17-22) interacts with FAD; sequence GAGAAG. 211–216 serves as a coordination point for NADP(+); the sequence is GNFASG.

It belongs to the FMO family.

The catalysed reaction is a (Z)-omega-(methylsulfanyl)-N-sulfo-alkylhydroximate S-glucoside + NADPH + O2 + H(+) = a (Z)-omega-(methylsulfinyl)-alkyl-glucosinolate + NADP(+) + H2O. Functionally, catalyzes the conversion of methylthioalkyl glucosinolates of any chain length into methylsulfinylalkyl glucosinolates. The polypeptide is Flavin-containing monooxygenase FMO GS-OX4 (FMOGS-OX4) (Arabidopsis thaliana (Mouse-ear cress)).